Reading from the N-terminus, the 396-residue chain is 8-amino-7-oxononanoate synthase (396 aa).

Arg21 lines the substrate pocket. 112-113 (GY) serves as a coordination point for pyridoxal 5'-phosphate. Substrate is bound at residue His137. Pyridoxal 5'-phosphate-binding residues include Ser183, His211, and Thr239. At Lys242 the chain carries N6-(pyridoxal phosphate)lysine. Residue Thr358 coordinates substrate.

It belongs to the class-II pyridoxal-phosphate-dependent aminotransferase family. BioF subfamily. As to quaternary structure, homodimer. Pyridoxal 5'-phosphate serves as cofactor.

The catalysed reaction is 6-carboxyhexanoyl-[ACP] + L-alanine + H(+) = (8S)-8-amino-7-oxononanoate + holo-[ACP] + CO2. The protein operates within cofactor biosynthesis; biotin biosynthesis. Catalyzes the decarboxylative condensation of pimeloyl-[acyl-carrier protein] and L-alanine to produce 8-amino-7-oxononanoate (AON), [acyl-carrier protein], and carbon dioxide. The chain is 8-amino-7-oxononanoate synthase from Bordetella petrii (strain ATCC BAA-461 / DSM 12804 / CCUG 43448).